A 663-amino-acid chain; its full sequence is Protein pat-12 (663 aa).

Over residues 1 to 15 the composition is skewed to polar residues; sequence MTSHIATETSVNRWS. 4 disordered regions span residues 1 to 78, 367 to 430, 517 to 546, and 597 to 663; these read MTSH…SGDY, RFEE…GQET, FRRG…DYRR, and PMPA…RRRR. Residues 367 to 380 are compositionally biased toward basic and acidic residues; that stretch reads RFEETRRTEEVERR. Residues 381-400 show a composition bias toward basic residues; the sequence is VQRREKKERRSRHHSSSRHH. Positions 517–526 are enriched in polar residues; the sequence is FRRGSQQQVS. 2 stretches are compositionally biased toward basic and acidic residues: residues 620-640 and 649-663; these read FNKE…KPVD and NYKR…RRRR.

In terms of assembly, interacts with vab-10 (via plankin domain). As to expression, isoform a: Expressed in the uterus, the vulva, the rectum, mechanosensory neurons and in head and tail neurons. Isoform e: Expressed in spermatheca and weakly in the vulva. Isoform f: Expressed in spermatheca and weakly in the vulva. Isoform i: Expressed in spermatheca and weakly in the vulva.

It localises to the apical cell membrane. Its subcellular location is the basal cell membrane. The protein resides in the cytoplasm. It is found in the cell junction. The protein localises to the hemidesmosome. It localises to the cell membrane. Its subcellular location is the cytoskeleton. Functionally, required for embryonic morphology and development. Plays both a functional and a structural role in the maintenance and probably biogenesis of fibrous organelles, a hemidesomosome-like junction structure, which ensures muscle stability and muscle connection to the external cuticle. This chain is Protein pat-12, found in Caenorhabditis elegans.